The sequence spans 176 residues: Photosystem I assembly protein Ycf4 (176 aa).

The next 2 membrane-spanning stretches (helical) occupy residues 22-42 (FLWA…GTAS) and 57-77 (VMTF…SMLF).

The protein belongs to the Ycf4 family.

Its subcellular location is the plastid thylakoid membrane. Its function is as follows. Seems to be required for the assembly of the photosystem I complex. The chain is Photosystem I assembly protein Ycf4 from Cuscuta obtusiflora (Peruvian dodder).